The primary structure comprises 107 residues: Toluene 1,2-dioxygenase system ferredoxin subunit (107 aa).

In terms of domain architecture, Rieske spans 4 to 99 (TYILRQGDLP…IKVEGDEVHV (96 aa)). C43, H45, C62, and H65 together coordinate [2Fe-2S] cluster.

The protein belongs to the bacterial ring-hydroxylating dioxygenase ferredoxin component family. This dioxygenase system consists of four proteins: the two subunits of the hydroxylase component (todC1 and todC2), a ferredoxin (TodB) and a ferredoxin reductase (TodA).

Its pathway is xenobiotic degradation; toluene degradation. Its function is as follows. This protein seems to be a 2Fe-2S ferredoxin. In Pseudomonas putida (strain ATCC 700007 / DSM 6899 / JCM 31910 / BCRC 17059 / LMG 24140 / F1), this protein is Toluene 1,2-dioxygenase system ferredoxin subunit (todB).